Here is a 797-residue protein sequence, read N- to C-terminus: Calcium-transporting ATPase CtpE (797 aa).

Transmembrane regions (helical) follow at residues 55 to 75 (LLLI…LLII), 215 to 235 (ILQF…YTQL), and 254 to 274 (VPMV…VGVV). The active-site 4-aspartylphosphate intermediate is aspartate 301. Residues aspartate 301, threonine 303, and aspartate 536 each contribute to the Mg(2+) site. The next 6 helical transmembrane spans lie at 601 to 621 (TVYS…AIPL), 633 to 653 (IHVT…LSLA), 667 to 687 (VMTS…VTYL), 703 to 723 (ASTA…AVIA), 729 to 749 (WRLA…SLPL), and 764 to 784 (TSIA…MWWI).

The protein belongs to the cation transport ATPase (P-type) (TC 3.A.3) family.

The protein resides in the cell membrane. The catalysed reaction is Ca(2+)(in) + ATP + H2O = Ca(2+)(out) + ADP + phosphate + H(+). In terms of biological role, P-type ATPase involved in specific uptake of calcium. This is Calcium-transporting ATPase CtpE (ctpE) from Mycobacterium tuberculosis (strain CDC 1551 / Oshkosh).